Here is a 517-residue protein sequence, read N- to C-terminus: Maturase K (517 aa).

It belongs to the intron maturase 2 family. MatK subfamily.

The protein localises to the plastid. It localises to the chloroplast. Functionally, usually encoded in the trnK tRNA gene intron. Probably assists in splicing its own and other chloroplast group II introns. In Phalaenopsis japonica (Orchid), this protein is Maturase K.